Here is a 28-residue protein sequence, read N- to C-terminus: Cyclotide ltri-A (28 aa).

The segment at residues G1–N28 is a cross-link (cyclopeptide (Gly-Asn)). Intrachain disulfides connect C4/C18, C8/C20, and C13/C25.

Belongs to the cyclotide family. Bracelet subfamily. In terms of processing, this is a cyclic peptide.

In terms of biological role, probably participates in a plant defense mechanism. This Leonia triandra protein is Cyclotide ltri-A.